A 239-amino-acid chain; its full sequence is Ribonuclease PH (239 aa).

Phosphate contacts are provided by residues Arg86 and 124 to 126 (GTR).

The protein belongs to the RNase PH family. Homohexameric ring arranged as a trimer of dimers.

It carries out the reaction tRNA(n+1) + phosphate = tRNA(n) + a ribonucleoside 5'-diphosphate. Phosphorolytic 3'-5' exoribonuclease that plays an important role in tRNA 3'-end maturation. Removes nucleotide residues following the 3'-CCA terminus of tRNAs; can also add nucleotides to the ends of RNA molecules by using nucleoside diphosphates as substrates, but this may not be physiologically important. Probably plays a role in initiation of 16S rRNA degradation (leading to ribosome degradation) during starvation. In Allorhizobium ampelinum (strain ATCC BAA-846 / DSM 112012 / S4) (Agrobacterium vitis (strain S4)), this protein is Ribonuclease PH.